Reading from the N-terminus, the 227-residue chain is 2-C-methyl-D-erythritol 4-phosphate cytidylyltransferase (227 aa).

The protein belongs to the IspD/TarI cytidylyltransferase family. IspD subfamily.

It catalyses the reaction 2-C-methyl-D-erythritol 4-phosphate + CTP + H(+) = 4-CDP-2-C-methyl-D-erythritol + diphosphate. It participates in isoprenoid biosynthesis; isopentenyl diphosphate biosynthesis via DXP pathway; isopentenyl diphosphate from 1-deoxy-D-xylulose 5-phosphate: step 2/6. In terms of biological role, catalyzes the formation of 4-diphosphocytidyl-2-C-methyl-D-erythritol from CTP and 2-C-methyl-D-erythritol 4-phosphate (MEP). The chain is 2-C-methyl-D-erythritol 4-phosphate cytidylyltransferase from Dehalococcoides mccartyi (strain CBDB1).